A 112-amino-acid chain; its full sequence is Nitrogen regulatory protein P-II (112 aa).

Tyr51 is subject to O-UMP-tyrosine.

The protein belongs to the P(II) protein family. In terms of assembly, homotrimer.

Functionally, in nitrogen-limiting conditions, when the ratio of Gln to 2-ketoglutarate decreases, P-II is uridylylated to P-II-UMP. P-II-UMP allows the deadenylation of glutamine synthetase (GS), thus activating the enzyme. Conversely, in nitrogen excess P-II is deuridylated and promotes the adenylation of GS. P-II indirectly controls the transcription of the GS gene (glnA). P-II prevents NR-II-catalyzed conversion of NR-I to NR-I-phosphate, the transcriptional activator of glnA. When P-II is uridylylated to P-II-UMP, these events are reversed. This is Nitrogen regulatory protein P-II (glnB) from Klebsiella oxytoca.